Here is a 115-residue protein sequence, read N- to C-terminus: U3-lycotoxin-Ls1g (115 aa).

A signal peptide spans 1-20 (MKFVLLFGVFLVTLFSYSSA). The propeptide occupies 21-44 (EMLDDFDQADEDELLSLIEKEEAR). 4 disulfides stabilise this stretch: Cys48–Cys63, Cys55–Cys72, Cys62–Cys87, and Cys74–Cys85.

This sequence belongs to the neurotoxin 19 (CSTX) family. 01 subfamily. Expressed by the venom gland.

The protein localises to the secreted. This chain is U3-lycotoxin-Ls1g, found in Lycosa singoriensis (Wolf spider).